The chain runs to 655 residues: Putative sensor protein Sfri_3689 (655 aa).

Positions 1 to 17 (MKTLLLLLIIITMPVLA) are cleaved as a signal peptide. Residues 252–272 (FALAILVAIMSAIGMIFTGFI) form a helical membrane-spanning segment. Positions 419–653 (GIAHEINNPT…QIRLIFALAQ (235 aa)) constitute a Histidine kinase domain. His-422 is modified (phosphohistidine; by autocatalysis).

The protein localises to the cell membrane. The catalysed reaction is ATP + protein L-histidine = ADP + protein N-phospho-L-histidine.. The polypeptide is Putative sensor protein Sfri_3689 (Shewanella frigidimarina (strain NCIMB 400)).